A 370-amino-acid chain; its full sequence is Immunoglobulin superfamily member 5 (370 aa).

The first 24 residues, 1–24, serve as a signal peptide directing secretion; it reads MEGSWRDVLAVLVILAQLTASGSS. Ig-like V-type domains follow at residues 25–125 and 128–215; these read YQII…LSVQ and GTLN…KSLT. The Extracellular portion of the chain corresponds to 25–239; that stretch reads YQIIEGPQNV…EEGPALPTWA (215 aa). Residues asparagine 33 and asparagine 45 are each glycosylated (N-linked (GlcNAc...) asparagine). A disulfide bond links cysteine 46 and cysteine 109. 3 N-linked (GlcNAc...) asparagine glycosylation sites follow: asparagine 146, asparagine 196, and asparagine 217. Cysteine 149 and cysteine 201 are joined by a disulfide. Residues 240-260 traverse the membrane as a helical segment; that stretch reads IILLAVAFSLLLILIIVLIII. Residues 261–370 lie on the Cytoplasmic side of the membrane; the sequence is FCCCCASRRE…PQKVRNVTLV (110 aa). A disordered region spans residues 284 to 359; sequence ANMRTNKADP…THPRVSFDIA (76 aa). Basic and acidic residues predominate over residues 289–301; sequence NKADPETKLKGGK.

This sequence belongs to the immunoglobulin superfamily. Interacts with MAGI1 at tight junctions, forms a tripartite complex with NPHS1. Interacts with LNX1 isoform 2 via its PDZ 2 domain, it may also interact with other isoforms containing this domain. In terms of processing, N-glycosylated. As to expression, localized to kidney glomeruli and small intestinal epithelial cells. In kidney glomeruli, it is localized at slit diaphragm. Also found in spermatogonia, gonocytes, hematopoietic stem cells and Sertoli cells.

It is found in the apical cell membrane. The protein resides in the cell junction. The protein localises to the tight junction. In terms of biological role, provides, together with MAGI1, an adhesion machinery at tight junctions, which may regulate the permeability of kidney glomerulus and small intestinal epithelial cells. Mediates calcium-independent homophilic cell adhesion. In testis, it may function as a cell adhesion molecule rather than a tight-junction protein. It may participate in the adhesion between spermatogonia-spermatogonia, spermatogonia-Sertoli cells, and Sertoli cells-Sertoli cells. The protein is Immunoglobulin superfamily member 5 (Igsf5) of Mus musculus (Mouse).